We begin with the raw amino-acid sequence, 322 residues long: Formimidoylglutamase (322 aa).

Positions 127, 163, 165, 167, 254, and 256 each coordinate Mn(2+).

It belongs to the arginase family. Requires Mn(2+) as cofactor.

The catalysed reaction is N-formimidoyl-L-glutamate + H2O = formamide + L-glutamate. It participates in amino-acid degradation; L-histidine degradation into L-glutamate; L-glutamate from N-formimidoyl-L-glutamate (hydrolase route): step 1/1. Functionally, catalyzes the conversion of N-formimidoyl-L-glutamate to L-glutamate and formamide. The protein is Formimidoylglutamase of Paraburkholderia xenovorans (strain LB400).